A 177-amino-acid chain; its full sequence is MLKSIFAKRFASTGSYPGSTRITLPRRPAKKIQLGKSRPAIYHQFNVKMELSDGSVVIRRSQYPKGEIRLIQDQRNNPLWNPSRDDLVVVDANSGGSLDRFNKRYSSLFSVDSTTPNSSSETVELSEENKKKTQIKKEEKEDVSEKAFGMDDYLSLLDDSEQQIKSGKLASKKRDKK.

Residues 1 to 14 constitute a mitochondrion transit peptide; that stretch reads MLKSIFAKRFASTG. The sufficient for general mitochondrial translation stretch occupies residues 36–118; it reads KSRPAIYHQF…FSVDSTTPNS (83 aa). Residues 87–177 form a sufficient for dosage suppression of COX2 mutation region; that stretch reads LVVVDANSGG…KLASKKRDKK (91 aa). The span at 111 to 123 shows a compositional bias: polar residues; that stretch reads VDSTTPNSSSETV. Residues 111–144 form a disordered region; it reads VDSTTPNSSSETVELSEENKKKTQIKKEEKEDVS. Residues 127–144 are compositionally biased toward basic and acidic residues; the sequence is EENKKKTQIKKEEKEDVS.

This sequence belongs to the bacterial ribosomal protein bL31 family. Highly divergent. As to quaternary structure, component of the mitochondrial large ribosomal subunit (mt-LSU). Mature yeast 74S mitochondrial ribosomes consist of a small (37S) and a large (54S) subunit. The 37S small subunit contains a 15S ribosomal RNA (15S mt-rRNA) and 34 different proteins. The 54S large subunit contains a 21S rRNA (21S mt-rRNA) and 46 different proteins.

The protein resides in the mitochondrion. Functionally, component of the mitochondrial ribosome (mitoribosome), a dedicated translation machinery responsible for the synthesis of mitochondrial genome-encoded proteins, including at least some of the essential transmembrane subunits of the mitochondrial respiratory chain. The mitoribosomes are attached to the mitochondrial inner membrane and translation products are cotranslationally integrated into the membrane. Overexpression of bL31m suppresses mutations in the COX2 leader peptide-encoding and initiation codon regions. The polypeptide is Large ribosomal subunit protein bL31m (MRPL36) (Saccharomyces cerevisiae (strain ATCC 204508 / S288c) (Baker's yeast)).